The following is a 119-amino-acid chain: Hydrogenase maturation factor HypA (119 aa).

Residue histidine 2 participates in Ni(2+) binding. 4 residues coordinate Zn(2+): cysteine 73, cysteine 76, cysteine 89, and cysteine 92.

This sequence belongs to the HypA/HybF family.

Involved in the maturation of [NiFe] hydrogenases. Required for nickel insertion into the metal center of the hydrogenase. This Dehalococcoides mccartyi (strain CBDB1) protein is Hydrogenase maturation factor HypA.